The sequence spans 914 residues: DNA mismatch repair protein MutS (914 aa).

Residues 1-25 (MDKKNDHKNNLIPQPASSFASSQER) form a disordered region. The segment covering 11–25 (LIPQPASSFASSQER) has biased composition (polar residues). 662–669 (GPNMGGKS) is an ATP binding site.

The protein belongs to the DNA mismatch repair MutS family.

In terms of biological role, this protein is involved in the repair of mismatches in DNA. It is possible that it carries out the mismatch recognition step. This protein has a weak ATPase activity. This chain is DNA mismatch repair protein MutS, found in Bartonella tribocorum (strain CIP 105476 / IBS 506).